Consider the following 314-residue polypeptide: Acetaldehyde dehydrogenase 3 (314 aa).

The active-site Acyl-thioester intermediate is the C132. Residues 163 to 171 (SAGPGTRAN) and N291 contribute to the NAD(+) site.

The protein belongs to the acetaldehyde dehydrogenase family.

The catalysed reaction is acetaldehyde + NAD(+) + CoA = acetyl-CoA + NADH + H(+). The sequence is that of Acetaldehyde dehydrogenase 3 from Dechloromonas aromatica (strain RCB).